Consider the following 101-residue polypeptide: Protein Tat (101 aa).

The segment covering 1–12 has biased composition (basic and acidic residues); it reads MEPVDPRLEPWK. Residues 1–20 form a disordered region; sequence MEPVDPRLEPWKHPGSQPKT. The interaction with human CREBBP stretch occupies residues 1-24; the sequence is MEPVDPRLEPWKHPGSQPKTACTT. Positions 1–48 are transactivation; the sequence is MEPVDPRLEPWKHPGSQPKTACTTCYCKKCCFHCQVCFTKKALGISYG. The Zn(2+) site is built by Cys-22, Cys-25, and Cys-27. Positions 22–37 are cysteine-rich; that stretch reads CTTCYCKKCCFHCQVC. The residue at position 28 (Lys-28) is an N6-acetyllysine; by host PCAF. Positions 30, 33, 34, and 37 each coordinate Zn(2+). The tract at residues 38–48 is core; that stretch reads FTKKALGISYG. Residues 47-101 form a disordered region; that stretch reads YGRKKRRQRRRAPEDSQTHQVSLPKQPAPQFRGDPTGPKESKKKVERETETHPVD. The short motif at 49 to 57 is the Nuclear localization signal, RNA-binding (TAR), and protein transduction element; the sequence is RKKRRQRRR. Residues 49–86 form an interaction with the host capping enzyme RNGTT region; the sequence is RKKRRQRRRAPEDSQTHQVSLPKQPAPQFRGDPTGPKE. N6-acetyllysine; by host EP300 and GCN5L2 is present on residues Lys-50 and Lys-51. Asymmetric dimethylarginine; by host PRMT6 is present on residues Arg-52 and Arg-53. Lys-71 participates in a covalent cross-link: Glycyl lysine isopeptide (Lys-Gly) (interchain with G-Cter in ubiquitin). Residues 78-80 carry the Cell attachment site motif; it reads RGD. Residues 83-101 show a composition bias toward basic and acidic residues; that stretch reads GPKESKKKVERETETHPVD.

It belongs to the lentiviruses Tat family. In terms of assembly, interacts with host CCNT1. Associates with the P-TEFb complex composed at least of Tat, P-TEFb (CDK9 and CCNT1), TAR RNA, RNA Pol II. Recruits the HATs CREBBP, TAF1/TFIID, EP300, PCAF and GCN5L2. Interacts with host KAT5/Tip60; this interaction targets the latter to degradation. Interacts with the host deacetylase SIRT1. Interacts with host capping enzyme RNGTT; this interaction stimulates RNGTT. Binds to host KDR, and to the host integrins ITGAV/ITGB3 and ITGA5/ITGB1. Interacts with host KPNB1/importin beta-1 without previous binding to KPNA1/importin alpha-1. Interacts with EIF2AK2. Interacts with host nucleosome assembly protein NAP1L1; this interaction may be required for the transport of Tat within the nucleus, since the two proteins interact at the nuclear rim. Interacts with host C1QBP/SF2P32; this interaction involves lysine-acetylated Tat. Interacts with the host chemokine receptors CCR2, CCR3 and CXCR4. Interacts with host DPP4/CD26; this interaction may trigger an anti-proliferative effect. Interacts with host LDLR. Interacts with the host extracellular matrix metalloproteinase MMP1. Interacts with host PRMT6; this interaction mediates Tat's methylation. Interacts with, and is ubiquitinated by MDM2/Hdm2. Interacts with host PSMC3 and HTATIP2. Interacts with STAB1; this interaction may overcome SATB1-mediated repression of IL2 and IL2RA (interleukin) in T cells by binding to the same domain than HDAC1. Interacts (when acetylated) with human CDK13, thereby increasing HIV-1 mRNA splicing and promoting the production of the doubly spliced HIV-1 protein Nef. Interacts with host TBP; this interaction modulates the activity of transcriptional pre-initiation complex. Interacts with host RELA. Interacts with host PLSCR1; this interaction negatively regulates Tat transactivation activity by altering its subcellular distribution. Asymmetrical arginine methylation by host PRMT6 seems to diminish the transactivation capacity of Tat and affects the interaction with host CCNT1. Post-translationally, acetylation by EP300, CREBBP, GCN5L2/GCN5 and PCAF regulates the transactivation activity of Tat. EP300-mediated acetylation of Lys-50 promotes dissociation of Tat from the TAR RNA through the competitive binding to PCAF's bromodomain. In addition, the non-acetylated Tat's N-terminus can also interact with PCAF. PCAF-mediated acetylation of Lys-28 enhances Tat's binding to CCNT1. Lys-50 is deacetylated by SIRT1. In terms of processing, polyubiquitination by host MDM2 does not target Tat to degradation, but activates its transactivation function and fosters interaction with CCNT1 and TAR RNA. Phosphorylated by EIF2AK2 on serine and threonine residues adjacent to the basic region important for TAR RNA binding and function. Phosphorylation of Tat by EIF2AK2 is dependent on the prior activation of EIF2AK2 by dsRNA.

The protein localises to the host nucleus. The protein resides in the host nucleolus. It is found in the host cytoplasm. Its subcellular location is the secreted. In terms of biological role, transcriptional activator that increases RNA Pol II processivity, thereby increasing the level of full-length viral transcripts. Recognizes a hairpin structure at the 5'-LTR of the nascent viral mRNAs referred to as the transactivation responsive RNA element (TAR) and recruits the cyclin T1-CDK9 complex (P-TEFb complex) that will in turn hyperphosphorylate the RNA polymerase II to allow efficient elongation. The CDK9 component of P-TEFb and other Tat-activated kinases hyperphosphorylate the C-terminus of RNA Pol II that becomes stabilized and much more processive. Other factors such as HTATSF1/Tat-SF1, SUPT5H/SPT5, and HTATIP2 are also important for Tat's function. Besides its effect on RNA Pol II processivity, Tat induces chromatin remodeling of proviral genes by recruiting the histone acetyltransferases (HATs) CREBBP, EP300 and PCAF to the chromatin. This also contributes to the increase in proviral transcription rate, especially when the provirus integrates in transcriptionally silent region of the host genome. To ensure maximal activation of the LTR, Tat mediates nuclear translocation of NF-kappa-B by interacting with host RELA. Through its interaction with host TBP, Tat may also modulate transcription initiation. Tat can reactivate a latently infected cell by penetrating in it and transactivating its LTR promoter. In the cytoplasm, Tat is thought to act as a translational activator of HIV-1 mRNAs. Its function is as follows. Extracellular circulating Tat can be endocytosed by surrounding uninfected cells via the binding to several surface receptors such as CD26, CXCR4, heparan sulfate proteoglycans (HSPG) or LDLR. Neurons are rarely infected, but they internalize Tat via their LDLR. Through its interaction with nuclear HATs, Tat is potentially able to control the acetylation-dependent cellular gene expression. Modulates the expression of many cellular genes involved in cell survival, proliferation or in coding for cytokines or cytokine receptors. Tat plays a role in T-cell and neurons apoptosis. Tat induced neurotoxicity and apoptosis probably contribute to neuroAIDS. Circulating Tat also acts as a chemokine-like and/or growth factor-like molecule that binds to specific receptors on the surface of the cells, affecting many cellular pathways. In the vascular system, Tat binds to ITGAV/ITGB3 and ITGA5/ITGB1 integrins dimers at the surface of endothelial cells and competes with bFGF for heparin-binding sites, leading to an excess of soluble bFGF. This Human immunodeficiency virus type 1 group M subtype B (isolate MN) (HIV-1) protein is Protein Tat.